The primary structure comprises 160 residues: Ubiquitin-like protein ATG12 (160 aa).

Positions 1 to 40 (MSETPKDQGPSSPSPSPSPSAASPMPLADNEVAGSGASSP) are disordered. Residue Gly160 forms a Glycyl lysine isopeptide (Gly-Lys) (interchain with K-102 in ATG5) linkage.

It belongs to the ATG12 family. As to quaternary structure, forms a conjugate with ATG5. Forms a thioester bond with the 'Cys-196' of ATG10. Interacts with the ATG7 C-terminal 40 amino acids domain. The ATG12-ATG5 conjugate forms a complex with several units of ATG16. The ATG12-ATG5 conjugate also associates with ATG3.

It is found in the preautophagosomal structure membrane. In terms of biological role, ubiquitin-like protein involved in cytoplasm to vacuole transport (Cvt), autophagy vesicles formation, mitophagy, and nucleophagy. Conjugation with ATG5 through a ubiquitin-like conjugating system involving also ATG7 as an E1-like activating enzyme and ATG10 as an E2-like conjugating enzyme, is essential for its function. The ATG12-ATG5 conjugate acts as an E3-like enzyme which is required for lipidation of ATG8 and ATG8 association to the vesicle membranes. ATG12-ATG5 rearranges the ATG3 catalytic center and enhances its E2 activity. Autophagy is required for proper vegetative growth, asexual/sexual reproduction, and full virulence. Autophagy is particularly involved in the biosynthesis of deoxynivalenol (DON), an important virulence determinant. The sequence is that of Ubiquitin-like protein ATG12 from Gibberella zeae (strain ATCC MYA-4620 / CBS 123657 / FGSC 9075 / NRRL 31084 / PH-1) (Wheat head blight fungus).